We begin with the raw amino-acid sequence, 342 residues long: Ferredoxin--NADP reductase (342 aa).

Residues Cys17, Asp36, Gln44, Tyr49, Val89, Phe124, Asp289, and Thr330 each contribute to the FAD site.

This sequence belongs to the ferredoxin--NADP reductase type 2 family. As to quaternary structure, homodimer. The cofactor is FAD.

The enzyme catalyses 2 reduced [2Fe-2S]-[ferredoxin] + NADP(+) + H(+) = 2 oxidized [2Fe-2S]-[ferredoxin] + NADPH. This is Ferredoxin--NADP reductase from Bradyrhizobium diazoefficiens (strain JCM 10833 / BCRC 13528 / IAM 13628 / NBRC 14792 / USDA 110).